Consider the following 128-residue polypeptide: Large ribosomal subunit protein bL17 (128 aa).

Belongs to the bacterial ribosomal protein bL17 family. As to quaternary structure, part of the 50S ribosomal subunit. Contacts protein L32.

In Haemophilus influenzae (strain 86-028NP), this protein is Large ribosomal subunit protein bL17.